Consider the following 274-residue polypeptide: uncharacterized protein (274 aa).

The signal sequence occupies residues 1–17 (MKKLLAGFLTLSLALAA). Cys18 is lipidated: N-palmitoyl cysteine. A lipid anchor (S-diacylglycerol cysteine) is attached at Cys18. The interval 18–169 (CSNGSDDDSS…DANNGASSAN (152 aa)) is disordered. Positions 25–76 (DSSKKDDSSKDNQSSDDKSKDSKNDDKKNNDSDKDKDNNSDSDKNSDSKSDD) are enriched in basic and acidic residues. The segment covering 91 to 169 (SDNASGSDSS…DANNGASSAN (79 aa)) has biased composition (low complexity).

The protein resides in the cell membrane. This is an uncharacterized protein from Staphylococcus saprophyticus subsp. saprophyticus (strain ATCC 15305 / DSM 20229 / NCIMB 8711 / NCTC 7292 / S-41).